Consider the following 252-residue polypeptide: Large ribosomal subunit protein uL30 (252 aa).

Belongs to the universal ribosomal protein uL30 family.

Its function is as follows. Binds to G-rich structures in 28S rRNA and in mRNAs. Plays a regulatory role in the translation apparatus; inhibits cell-free translation of mRNAs. This is Large ribosomal subunit protein uL30 (RpL7) from Drosophila melanogaster (Fruit fly).